A 72-amino-acid chain; its full sequence is ATP synthase subunit c (72 aa).

2 consecutive transmembrane segments (helical) span residues 1–21 and 48–68; these read MSLG…GAGI and MFIG…FSFI.

It belongs to the ATPase C chain family. F-type ATPases have 2 components, F(1) - the catalytic core - and F(0) - the membrane proton channel. F(1) has five subunits: alpha(3), beta(3), gamma(1), delta(1), epsilon(1). F(0) has three main subunits: a(1), b(2) and c(10-14). The alpha and beta chains form an alternating ring which encloses part of the gamma chain. F(1) is attached to F(0) by a central stalk formed by the gamma and epsilon chains, while a peripheral stalk is formed by the delta and b chains.

The protein localises to the cell membrane. F(1)F(0) ATP synthase produces ATP from ADP in the presence of a proton or sodium gradient. F-type ATPases consist of two structural domains, F(1) containing the extramembraneous catalytic core and F(0) containing the membrane proton channel, linked together by a central stalk and a peripheral stalk. During catalysis, ATP synthesis in the catalytic domain of F(1) is coupled via a rotary mechanism of the central stalk subunits to proton translocation. Functionally, key component of the F(0) channel; it plays a direct role in translocation across the membrane. A homomeric c-ring of between 10-14 subunits forms the central stalk rotor element with the F(1) delta and epsilon subunits. The protein is ATP synthase subunit c of Geobacillus stearothermophilus (Bacillus stearothermophilus).